The sequence spans 277 residues: MGNGVQPLDPVAIQIGSISVKWYGVIIASAVVIALLLALSEANKRKMDKEIIVDLLIWAIPISIISARIYYVIFEWDFYKNNLGEIVKIWHGGIAIYGALIGAVLTAIIFSRIKKISFWQLADVVAPSLIIAQAIGRWGNFMNQEAHGAETTRSFLESLHLPDFIINQMYIDGAYYQPTFLYESLWNVLGFIVLLIIRRTKIRRGELFLGYVIWYSFGRFFIEGMRTDSLMWGDFRVSQVLSLLLIVLSIGIIIYRRMKMNPPYYMEDKFGKVVKKK.

The next 4 helical transmembrane spans lie at 18–38 (ISVK…LLLA), 51–71 (IIVD…RIYY), 89–109 (IWHG…TAII), and 116–136 (ISFW…QAIG). R137 contacts a 1,2-diacyl-sn-glycero-3-phospho-(1'-sn-glycerol). 3 helical membrane passes run 177-197 (QPTF…LLII), 205-225 (GELF…IEGM), and 235-255 (FRVS…IIIY).

This sequence belongs to the Lgt family.

The protein localises to the cell membrane. It catalyses the reaction L-cysteinyl-[prolipoprotein] + a 1,2-diacyl-sn-glycero-3-phospho-(1'-sn-glycerol) = an S-1,2-diacyl-sn-glyceryl-L-cysteinyl-[prolipoprotein] + sn-glycerol 1-phosphate + H(+). It participates in protein modification; lipoprotein biosynthesis (diacylglyceryl transfer). Functionally, catalyzes the transfer of the diacylglyceryl group from phosphatidylglycerol to the sulfhydryl group of the N-terminal cysteine of a prolipoprotein, the first step in the formation of mature lipoproteins. This Listeria monocytogenes serotype 4b (strain CLIP80459) protein is Phosphatidylglycerol--prolipoprotein diacylglyceryl transferase.